The following is a 419-amino-acid chain: L-2-hydroxyglutarate dehydrogenase, mitochondrial (419 aa).

The N-terminal 51 residues, 1 to 51, are a transit peptide targeting the mitochondrion; the sequence is MVPALRYLVGACGRARGGFAGDFPGASGLASGRPRPLCGGSRSASTSSFDI. An N6-acetyllysine mark is found at Lys104 and Lys173.

It belongs to the L2HGDH family. FAD serves as cofactor.

Its subcellular location is the mitochondrion. The catalysed reaction is (S)-2-hydroxyglutarate + A = 2-oxoglutarate + AH2. This Pongo abelii (Sumatran orangutan) protein is L-2-hydroxyglutarate dehydrogenase, mitochondrial (L2HGDH).